Reading from the N-terminus, the 979-residue chain is Translation initiation factor IF-2 (979 aa).

A disordered region spans residues 33–391; that stretch reads VKSHSSTITT…TPPAEITLTE (359 aa). Composition is skewed to low complexity over residues 54–63 and 139–150; these read QKRPQAPKAQ and AKTTSPKAEPAA. Positions 151–166 are enriched in pro residues; the sequence is PAAPKPKLMGPPPRPT. Acidic residues predominate over residues 234–252; it reads PELDEEPDTNNVEGDDDAT. Basic residues-rich tracts occupy residues 263 to 278 and 294 to 303; these read PAAK…PSKR and TKTSKLKRRP. The segment covering 314–328 has biased composition (polar residues); that stretch reads GTTTNNNAEVPSVSL. Residues 371–380 are compositionally biased toward basic and acidic residues; it reads KEQRRDRPDV. Residues 468–641 enclose the tr-type G domain; that stretch reads HRPPVVTIMG…LLVSEIEELS (174 aa). Residues 477 to 484 are G1; sequence GHVDHGKT. GTP is bound at residue 477 to 484; sequence GHVDHGKT. The interval 502–506 is G2; that stretch reads GITQH. The G3 stretch occupies residues 527-530; the sequence is DTPG. GTP is bound by residues 527–531 and 581–584; these read DTPGH and NKMD. A G4 region spans residues 581-584; that stretch reads NKMD. The segment at 617-619 is G5; sequence SAL.

Belongs to the TRAFAC class translation factor GTPase superfamily. Classic translation factor GTPase family. IF-2 subfamily.

It is found in the cytoplasm. In terms of biological role, one of the essential components for the initiation of protein synthesis. Protects formylmethionyl-tRNA from spontaneous hydrolysis and promotes its binding to the 30S ribosomal subunits. Also involved in the hydrolysis of GTP during the formation of the 70S ribosomal complex. The chain is Translation initiation factor IF-2 from Picosynechococcus sp. (strain ATCC 27264 / PCC 7002 / PR-6) (Agmenellum quadruplicatum).